The primary structure comprises 557 residues: Potassium-transporting ATPase potassium-binding subunit (557 aa).

12 helical membrane passes run 5–25, 63–83, 132–152, 170–190, 253–273, 283–303, 329–349, 356–376, 379–399, 416–436, 484–504, and 526–546; these read GFLLIATFLLVLMVLARPLGS, LCAILGLNMLGLAVLFFMLLG, GLTVQNFLSAASGIAVIFALI, LLRITLWVLVPVALLIALFFI, FVQMLAIFLIPTALCFAFGEV, LLWAMSVIFVICVGVVMWAEV, VLVSSLFAVVTTAASCGAVIA, ALGGMVPMWLMQIGEVVFGGV, GLYGMMLFVLLAVFIAGLMIG, LTALAILVTPTLVLMGAALAM, LLAFCMFVGRFGVIIPVMAIA, and LFVGLLIGTVLLVGALTFIPA.

The protein belongs to the KdpA family. As to quaternary structure, the system is composed of three essential subunits: KdpA, KdpB and KdpC.

The protein resides in the cell inner membrane. Functionally, part of the high-affinity ATP-driven potassium transport (or Kdp) system, which catalyzes the hydrolysis of ATP coupled with the electrogenic transport of potassium into the cytoplasm. This subunit binds the periplasmic potassium ions and delivers the ions to the membrane domain of KdpB through an intramembrane tunnel. In Escherichia coli O139:H28 (strain E24377A / ETEC), this protein is Potassium-transporting ATPase potassium-binding subunit.